The following is a 1571-amino-acid chain: Neurexin-3 (1571 aa).

Residues 1–27 form the signal peptide; the sequence is MSFTLHSVFFTLKVSIFLGSLVGLCLG. Positions 28 to 202 constitute a Laminin G-like 1 domain; the sequence is LEFMGLPNQW…SVQLEAEGPC (175 aa). Topologically, residues 28-1496 are extracellular; sequence LEFMGLPNQW…EVIRESSSTT (1469 aa). Residues N58 and N105 are each glycosylated (N-linked (GlcNAc...) asparagine). Residues 198–235 enclose the EGF-like 1 domain; that stretch reads AEGPCGERPCENGGICFLLDGHPTCDCSTTGYGGTLCS. Intrachain disulfides connect C202-C213, C207-C222, and C224-C234. 2 Laminin G-like domains span residues 258 to 440 and 447 to 639; these read VATF…VFKC and DPIN…KSSC. Ca(2+) is bound by residues D304, L321, and M374. Intrachain disulfides connect C404–C440, C610–C639, C647–C658, C652–C667, and C669–C679. Residues 643-680 form the EGF-like 2 domain; it reads SAKQCDSYPCKNNAVCKDGWNRFICDCTGTGYWGRTCE. 2 Laminin G-like domains span residues 685–857 and 871–1046; these read ILSY…IDYC and DPVT…ERGC. D732 and L749 together coordinate Ca(2+). A glycan (N-linked (GlcNAc...) asparagine) is linked at N757. Residue R807 participates in Ca(2+) binding. 4 disulfide bridges follow: C1018–C1046, C1053–C1064, C1058–C1073, and C1075–C1085. The EGF-like 3 domain maps to 1049–1086; it reads PSTTCQEDSCANQGVCMQQWEGFTCDCSMTSYSGNQCN. In terms of domain architecture, Laminin G-like 6 spans 1090–1290; sequence ATYIFGKSGG…NPNIKINGSV (201 aa). 2 residues coordinate Ca(2+): D1142 and I1159. N-linked (GlcNAc...) asparagine glycosylation is present at N1189. Ca(2+)-binding residues include I1241 and N1243. Residues N1287 and N1331 are each glycosylated (N-linked (GlcNAc...) asparagine). Positions 1324-1348 are disordered; the sequence is ATTTTRKNRSTASIQPTSDDLVSSA. Polar residues predominate over residues 1333-1348; the sequence is STASIQPTSDDLVSSA. The O-linked (Xyl...) (heparan sulfate) serine glycan is linked to S1347. A helical transmembrane segment spans residues 1497–1517; sequence GMVVGIVAAAALCILILLYAM. Topologically, residues 1518-1571 are cytoplasmic; that stretch reads YKYRNRDEGSYQVDETRNYISNSAQSNGTLMKEKQASSKSGHKKQKNKDKEYYV. The disordered stretch occupies residues 1539 to 1571; that stretch reads NSAQSNGTLMKEKQASSKSGHKKQKNKDKEYYV.

Belongs to the neurexin family. The laminin G-like domain 2 binds to NXPH1. Specific isoforms bind to alpha-dystroglycan. The cytoplasmic C-terminal region binds to CASK. Specific isoforms bind neuroligins NLGN1, NLGN2 and NLGN3. Interacts with CLSTN3. O-glycosylated; contains heparan sulfate. Heparan sulfate attachment is required for synapse development by mediating interactions with neuroligins. As to expression, brain and arteries (at protein level).

It is found in the presynaptic cell membrane. In terms of biological role, neuronal cell surface protein that may be involved in cell recognition and cell adhesion. May mediate intracellular signaling. The polypeptide is Neurexin-3 (Nrxn3) (Mus musculus (Mouse)).